A 274-amino-acid polypeptide reads, in one-letter code: 3-methyl-2-oxobutanoate hydroxymethyltransferase (274 aa).

Residues D50 and D89 each contribute to the Mg(2+) site. Residues 50-51 (DS), D89, and K119 contribute to the 3-methyl-2-oxobutanoate site. Residue E121 participates in Mg(2+) binding. E188 (proton acceptor) is an active-site residue.

This sequence belongs to the PanB family. Homodecamer; pentamer of dimers. Requires Mg(2+) as cofactor.

The protein localises to the cytoplasm. It carries out the reaction 3-methyl-2-oxobutanoate + (6R)-5,10-methylene-5,6,7,8-tetrahydrofolate + H2O = 2-dehydropantoate + (6S)-5,6,7,8-tetrahydrofolate. It participates in cofactor biosynthesis; (R)-pantothenate biosynthesis; (R)-pantoate from 3-methyl-2-oxobutanoate: step 1/2. Its function is as follows. Catalyzes the reversible reaction in which hydroxymethyl group from 5,10-methylenetetrahydrofolate is transferred onto alpha-ketoisovalerate to form ketopantoate. The protein is 3-methyl-2-oxobutanoate hydroxymethyltransferase of Methylorubrum extorquens (strain PA1) (Methylobacterium extorquens).